A 180-amino-acid chain; its full sequence is MIIYLHGFDSTSPGNHEKVLQLQFIDPDVRFISYSTLHPRHDMQHLLKEVDKAVQQGGDKHSLICGVGLGGFWAERIGFLCGIRQVIFNPNLSPEQHMQGKIDRPEEYRDIATKCVEDFREKNRDRCLVVLSRHDEVLDSQLSAELLHKYYEIVWDEQQTHKFKNLSPHLQRIKAFKTLP.

The protein belongs to the UPF0227 family.

This is UPF0227 protein Spro_1925 from Serratia proteamaculans (strain 568).